A 356-amino-acid chain; its full sequence is Phosphoribosylformylglycinamidine cyclo-ligase (356 aa).

This sequence belongs to the AIR synthase family.

Its subcellular location is the cytoplasm. The catalysed reaction is 2-formamido-N(1)-(5-O-phospho-beta-D-ribosyl)acetamidine + ATP = 5-amino-1-(5-phospho-beta-D-ribosyl)imidazole + ADP + phosphate + H(+). It functions in the pathway purine metabolism; IMP biosynthesis via de novo pathway; 5-amino-1-(5-phospho-D-ribosyl)imidazole from N(2)-formyl-N(1)-(5-phospho-D-ribosyl)glycinamide: step 2/2. This is Phosphoribosylformylglycinamidine cyclo-ligase from Acinetobacter baylyi (strain ATCC 33305 / BD413 / ADP1).